The chain runs to 431 residues: Peptidase B (431 aa).

Mn(2+) contacts are provided by lysine 196 and aspartate 201. Lysine 208 is a catalytic residue. Residues aspartate 219, aspartate 278, and glutamate 280 each coordinate Mn(2+). The active site involves arginine 282.

The protein belongs to the peptidase M17 family. In terms of assembly, homohexamer. Mn(2+) serves as cofactor.

The protein localises to the cytoplasm. It carries out the reaction Release of an N-terminal amino acid, Xaa, from a peptide or arylamide. Xaa is preferably Glu or Asp but may be other amino acids, including Leu, Met, His, Cys and Gln.. Probably plays an important role in intracellular peptide degradation. In Vibrio atlanticus (strain LGP32) (Vibrio splendidus (strain Mel32)), this protein is Peptidase B.